Here is a 228-residue protein sequence, read N- to C-terminus: Ribonuclease 3 (228 aa).

The region spanning 7–132 (LSAFMDRLGH…VIAAVYLDAG (126 aa)) is the RNase III domain. Mg(2+) is bound at residue Glu45. Asp49 is an active-site residue. Positions 118 and 121 each coordinate Mg(2+). Residue Glu121 is part of the active site. The DRBM domain occupies 157-226 (DPKTALQEWA…AKALLERLER (70 aa)).

This sequence belongs to the ribonuclease III family. Homodimer. Mg(2+) is required as a cofactor.

The protein resides in the cytoplasm. It catalyses the reaction Endonucleolytic cleavage to 5'-phosphomonoester.. Digests double-stranded RNA. Involved in the processing of ribosomal RNA precursors and of some mRNAs. Complements an E.coli disruption mutant, but the E.coli enzyme does not cleave R.capsulatus rRNA precursor, showing substrate recognition is different. Probably also processes some mRNAs, and tRNAs when they are encoded in the rRNA operon. Probably processes pre-crRNA and tracrRNA of type II CRISPR loci if present in the organism. The protein is Ribonuclease 3 (rnc) of Rhodobacter capsulatus (Rhodopseudomonas capsulata).